The sequence spans 1701 residues: Coiled-coil domain-containing protein 180 (1701 aa).

Positions 1-35 (MRGGENRPPARVQSSSEELELRHQSLDAFPGRRLP) are disordered. The stretch at 171 to 198 (QRQAEHKRKSYESALASFQEEIAQVGKE) forms a coiled coil. 3 disordered regions span residues 657–808 (EKPS…DKEE), 1272–1291 (HHCD…CGSR), and 1319–1354 (GFKR…KPNK). Over residues 661 to 671 (QKRVKKLRKKQ) the composition is skewed to basic residues. Residues 672-682 (GSKEDMTRSEE) are compositionally biased toward basic and acidic residues. The segment covering 683–692 (SISSGTSTAR) has biased composition (polar residues). Acidic residues predominate over residues 696–705 (EVEEENDQEM). A compositionally biased stretch (basic and acidic residues) spans 755–766 (ENVKGQGEKKEE). Residues 757 to 804 (VKGQGEKKEESEEEDEKEEEEEEEKLEEEKEEKEAQEEQESLSVGEEE) adopt a coiled-coil conformation. Residues 767 to 808 (SEEEDEKEEEEEEEKLEEEKEEKEAQEEQESLSVGEEEDKEE) show a composition bias toward acidic residues.

The chain is Coiled-coil domain-containing protein 180 (CCDC180) from Homo sapiens (Human).